A 161-amino-acid polypeptide reads, in one-letter code: Putative 4-hydroxy-4-methyl-2-oxoglutarate aldolase (161 aa).

Substrate is bound by residues 75 to 78 (GDNL) and Arg97. An a divalent metal cation-binding site is contributed by Asp98.

Belongs to the class II aldolase/RraA-like family. In terms of assembly, homotrimer. It depends on a divalent metal cation as a cofactor.

It carries out the reaction 4-hydroxy-4-methyl-2-oxoglutarate = 2 pyruvate. The catalysed reaction is oxaloacetate + H(+) = pyruvate + CO2. Functionally, catalyzes the aldol cleavage of 4-hydroxy-4-methyl-2-oxoglutarate (HMG) into 2 molecules of pyruvate. Also contains a secondary oxaloacetate (OAA) decarboxylase activity due to the common pyruvate enolate transition state formed following C-C bond cleavage in the retro-aldol and decarboxylation reactions. The protein is Putative 4-hydroxy-4-methyl-2-oxoglutarate aldolase of Alkalilimnicola ehrlichii (strain ATCC BAA-1101 / DSM 17681 / MLHE-1).